Here is a 148-residue protein sequence, read N- to C-terminus: UPF0179 protein Mpal_0949 (148 aa).

It belongs to the UPF0179 family.

This is UPF0179 protein Mpal_0949 from Methanosphaerula palustris (strain ATCC BAA-1556 / DSM 19958 / E1-9c).